Reading from the N-terminus, the 424-residue chain is MDLHELERLRAENEQLKAELASKQHQIKQNDIKSYKGLSFEEHRRYGRQMIVSEFGSLTSQLKLKQCKTLVVGAGGLGCPSLMYLVGAGVGTIGIVDDDLVDETNLHRQVLHSTTSVGRLKCESAKSYLQELNPNVNIITYPVRLSNKNAFEIFADFDLVLDCTDSPASRYLINDVAVYFNIPVVSGSGLRTEGQLSVFNYENGPCYRCFYPDPPAANSVTSCSEGGVLGPVIGLLGTAMAVEAIKVITGFYHNTFKPFLTMYSAYPQQTFRVFKMRGKQKTCLCNHITRQAIESIDYSEFCGTLGPVNLLSHDQRISVHDYNSVRNSDHVLLDVRPKEQFEVSSFPGAVNIPWDSVLSKTTNIDKIDQLQLPPKSPIYVVCRYGNDSQLATKKLLDMGWNNVKDIKGGVSRWYSEVDQNIPFY.

Residues G76, D97, 104–108 (TNLHR), K121, and 165–166 (DS) each bind ATP. Positions 206 and 209 each coordinate Zn(2+). C223 serves as the catalytic Glycyl thioester intermediate; for adenylyltransferase activity. A Zn(2+)-binding site is contributed by C283. The Rhodanese domain occupies 326 to 422 (RNSDHVLLDV…WYSEVDQNIP (97 aa)). The active-site Cysteine persulfide intermediate; for sulfurtransferase activity is the C382.

This sequence in the N-terminal section; belongs to the HesA/MoeB/ThiF family. UBA4 subfamily. Zn(2+) serves as cofactor.

It localises to the cytoplasm. The protein localises to the cytosol. It functions in the pathway tRNA modification; 5-methoxycarbonylmethyl-2-thiouridine-tRNA biosynthesis. In terms of biological role, plays a central role in 2-thiolation of mcm(5)S(2)U at tRNA wobble positions of cytosolic tRNA(Lys), tRNA(Glu) and tRNA(Gln). Acts by mediating the C-terminal thiocarboxylation of sulfur carrier URM1. Its N-terminus first activates URM1 as acyl-adenylate (-COAMP), then the persulfide sulfur on the catalytic cysteine is transferred to URM1 to form thiocarboxylation (-COSH) of its C-terminus. The reaction probably involves hydrogen sulfide that is generated from the persulfide intermediate and that acts as a nucleophile towards URM1. Subsequently, a transient disulfide bond is formed. Does not use thiosulfate as sulfur donor; NFS1 probably acting as a sulfur donor for thiocarboxylation reactions. Prior mcm(5) tRNA modification by the elongator complex is required for 2-thiolation. May also be involved in protein urmylation. This chain is Adenylyltransferase and sulfurtransferase UBA4, found in Meyerozyma guilliermondii (strain ATCC 6260 / CBS 566 / DSM 6381 / JCM 1539 / NBRC 10279 / NRRL Y-324) (Yeast).